Reading from the N-terminus, the 906-residue chain is Catenin alpha-1 (906 aa).

Residue Thr-2 is modified to N-acetylthreonine. The interval 2 to 228 is involved in homodimerization; sequence TAVHAGNINF…PILYTASQAC (227 aa). Lys-57 participates in a covalent cross-link: Glycyl lysine isopeptide (Lys-Gly) (interchain with G-Cter in SUMO2). Residues 97-148 are interaction with JUP and CTNNB1; the sequence is VRKQGDLMKSAAGEFADDPCSSVKRGNMVRAARALLSAVTRLLILADMADVY. Phosphoserine is present on residues Ser-264, Ser-295, and Ser-297. The interval 325–394 is interaction with alpha-actinin; that stretch reads TRDDRRERIV…AVMDHVSDSF (70 aa). Residue Thr-634 is modified to Phosphothreonine. Ser-641 bears the Phosphoserine mark. At Thr-645 the chain carries Phosphothreonine. Phosphoserine is present on residues Ser-652 and Ser-655. Thr-658 is modified (phosphothreonine). Residue Lys-797 forms a Glycyl lysine isopeptide (Lys-Gly) (interchain with G-Cter in SUMO2) linkage. Phosphoserine is present on Ser-851. A compositionally biased stretch (basic and acidic residues) spans 864-880; the sequence is PEKKPLVKREKQDETQT. The interval 864-894 is disordered; the sequence is PEKKPLVKREKQDETQTKIKRASQKKHVNPV. The span at 881 to 891 shows a compositional bias: basic residues; sequence KIKRASQKKHV.

The protein belongs to the vinculin/alpha-catenin family. Monomer and homodimer; the monomer preferentially binds to CTNNB1 and the homodimer to actin. Component of an cadherin:catenin adhesion complex composed of at least of CDH26, beta-catenin/CTNNB1, alpha-catenin/CTNNA1 and p120 catenin/CTNND1. Possible component of an E-cadherin/ catenin adhesion complex together with E-cadherin/CDH1 and beta-catenin/CTNNB1 or gamma-catenin/JUP; the complex is located to adherens junctions. The stable association of CTNNA1 is controversial as CTNNA1 was shown not to bind to F-actin when assembled in the complex. Alternatively, the CTNNA1-containing complex may be linked to F-actin by other proteins such as LIMA1. Binds AFDN and F-actin. Interacts with LIMA1. Interacts with ARHGAP21. Interacts with AJUBA. Interacts with vinculin/VCL. Interacts with TJP2/ZO2 (via N-terminus). Interacts with TJP1/ZO1 (via N-terminus). Sumoylated. In terms of processing, phosphorylation seems to contribute to the strength of cell-cell adhesion rather than to the basic capacity for cell-cell adhesion. Expressed in cerebellum, heart, liver, small intestine, kidney and placenta (at protein level).

Its subcellular location is the cytoplasm. The protein localises to the cytoskeleton. It localises to the cell junction. The protein resides in the adherens junction. It is found in the cell membrane. Its subcellular location is the nucleus. Associates with the cytoplasmic domain of a variety of cadherins. The association of catenins to cadherins produces a complex which is linked to the actin filament network, and which seems to be of primary importance for cadherins cell-adhesion properties. Can associate with both E- and N-cadherins. Originally believed to be a stable component of E-cadherin/catenin adhesion complexes and to mediate the linkage of cadherins to the actin cytoskeleton at adherens junctions. In contrast, cortical actin was found to be much more dynamic than E-cadherin/catenin complexes and CTNNA1 was shown not to bind to F-actin when assembled in the complex suggesting a different linkage between actin and adherens junctions components. The homodimeric form may regulate actin filament assembly and inhibit actin branching by competing with the Arp2/3 complex for binding to actin filaments. Involved in the regulation of WWTR1/TAZ, YAP1 and TGFB1-dependent SMAD2 and SMAD3 nuclear accumulation. May play a crucial role in cell differentiation. In Mus musculus (Mouse), this protein is Catenin alpha-1.